The sequence spans 345 residues: Fe-S cluster assembly protein DRE2 (345 aa).

The interval 29–163 is N-terminal SAM-like domain; the sequence is GDSGDRTLLL…KPDYAEQEVV (135 aa). Positions 164–237 are linker; sequence PLRFGAKKVN…EDTLLTEADL (74 aa). Cys247, Cys258, Cys261, and Cys263 together coordinate [2Fe-2S] cluster. The fe-S binding site A stretch occupies residues 247-263; sequence CAPQPGKKRRACKDCTC. [4Fe-4S] cluster is bound by residues Cys308, Cys311, Cys319, and Cys322. 2 short sequence motifs (cx2C motif) span residues 308 to 311 and 319 to 322; these read CNSC and CADC. Positions 308–322 are fe-S binding site B; that stretch reads CNSCYLGDAFRCADC.

The protein belongs to the anamorsin family. Monomer. Interacts with TAH18. Interacts with MIA40. [2Fe-2S] cluster serves as cofactor. [4Fe-4S] cluster is required as a cofactor.

The protein localises to the cytoplasm. It is found in the mitochondrion intermembrane space. Component of the cytosolic iron-sulfur (Fe-S) protein assembly (CIA) machinery required for the maturation of extramitochondrial Fe-S proteins. Part of an electron transfer chain functioning in an early step of cytosolic Fe-S biogenesis, facilitating the de novo assembly of a [4Fe-4S] cluster on the scaffold complex CFD1-NBP35. Electrons are transferred to DRE2 from NADPH via the FAD- and FMN-containing protein TAH18. TAH18-DRE2 are also required for the assembly of the diferric tyrosyl radical cofactor of ribonucleotide reductase (RNR), probably by providing electrons for reduction during radical cofactor maturation in the catalytic small subunit RNR2. This Podospora anserina (strain S / ATCC MYA-4624 / DSM 980 / FGSC 10383) (Pleurage anserina) protein is Fe-S cluster assembly protein DRE2.